The primary structure comprises 332 residues: NADH-quinone oxidoreductase subunit H (332 aa).

A run of 9 helical transmembrane segments spans residues 4 to 24 (FAFFALEALIKCIIIIAIFAS), 44 to 64 (IGPDMVGPFGLIQLVADMIKL), 78 to 98 (FIFAIAPLISAICAFVSLAAI), 120 to 140 (VALLFVIGTSGLCFYAVFLGG), 165 to 185 (VGALALIAIVMLVGSFSLVDI), 194 to 214 (FSWLIFKQPLAFVLFIIALFI), 255 to 275 (IAGAILVTLLFLGGFNSFWII), 279 to 299 (IMMIVKSSFIFFWYFWARAAF), and 312 to 332 (YLILIPLAVLNLLITALAVLL).

The protein belongs to the complex I subunit 1 family. NDH-1 is composed of 14 different subunits. Subunits NuoA, H, J, K, L, M, N constitute the membrane sector of the complex.

Its subcellular location is the cell inner membrane. It carries out the reaction a quinone + NADH + 5 H(+)(in) = a quinol + NAD(+) + 4 H(+)(out). In terms of biological role, NDH-1 shuttles electrons from NADH, via FMN and iron-sulfur (Fe-S) centers, to quinones in the respiratory chain. The immediate electron acceptor for the enzyme in this species is believed to be ubiquinone. Couples the redox reaction to proton translocation (for every two electrons transferred, four hydrogen ions are translocated across the cytoplasmic membrane), and thus conserves the redox energy in a proton gradient. This subunit may bind ubiquinone. The polypeptide is NADH-quinone oxidoreductase subunit H (Campylobacter jejuni subsp. jejuni serotype O:6 (strain 81116 / NCTC 11828)).